The sequence spans 101 residues: NADH-quinone oxidoreductase subunit K (101 aa).

The next 3 helical transmembrane spans lie at 4 to 24 (LADY…GIFI), 30 to 50 (LVLL…FIAF), and 61 to 81 (VFVF…LAIV).

The protein belongs to the complex I subunit 4L family. As to quaternary structure, NDH-1 is composed of 14 different subunits. Subunits NuoA, H, J, K, L, M, N constitute the membrane sector of the complex.

It localises to the cell inner membrane. The enzyme catalyses a quinone + NADH + 5 H(+)(in) = a quinol + NAD(+) + 4 H(+)(out). Its function is as follows. NDH-1 shuttles electrons from NADH, via FMN and iron-sulfur (Fe-S) centers, to quinones in the respiratory chain. The immediate electron acceptor for the enzyme in this species is believed to be ubiquinone. Couples the redox reaction to proton translocation (for every two electrons transferred, four hydrogen ions are translocated across the cytoplasmic membrane), and thus conserves the redox energy in a proton gradient. The polypeptide is NADH-quinone oxidoreductase subunit K (Alkalilimnicola ehrlichii (strain ATCC BAA-1101 / DSM 17681 / MLHE-1)).